The following is a 292-amino-acid chain: Complex I assembly factor TIMMDC1, mitochondrial (292 aa).

The next 2 helical transmembrane spans lie at 146–168 (WSWR…TVYR) and 195–215 (GLLS…VLIL).

Belongs to the Tim17/Tim22/Tim23 family. In terms of assembly, associates with the intermediate 315 kDa subcomplex of incompletely assembled complex I.

Its subcellular location is the mitochondrion membrane. Its function is as follows. Chaperone protein involved in the assembly of the mitochondrial NADH:ubiquinone oxidoreductase complex (complex I). Participates in constructing the membrane arm of complex I. This chain is Complex I assembly factor TIMMDC1, mitochondrial (timmdc1), found in Danio rerio (Zebrafish).